Here is a 258-residue protein sequence, read N- to C-terminus: UPF0246 protein CKO_03380 (258 aa).

It belongs to the UPF0246 family.

In Citrobacter koseri (strain ATCC BAA-895 / CDC 4225-83 / SGSC4696), this protein is UPF0246 protein CKO_03380.